The primary structure comprises 407 residues: Phosphoglycerate kinase (407 aa).

Substrate contacts are provided by residues 24 to 26, Arg-40, 63 to 66, Arg-121, and Arg-154; these read DFN and HLGR. ATP contacts are provided by residues Lys-205, Glu-337, and 363 to 366; that span reads GGDS.

This sequence belongs to the phosphoglycerate kinase family. Monomer.

The protein localises to the cytoplasm. It carries out the reaction (2R)-3-phosphoglycerate + ATP = (2R)-3-phospho-glyceroyl phosphate + ADP. It functions in the pathway carbohydrate degradation; glycolysis; pyruvate from D-glyceraldehyde 3-phosphate: step 2/5. The sequence is that of Phosphoglycerate kinase from Gloeobacter violaceus (strain ATCC 29082 / PCC 7421).